The chain runs to 389 residues: MVSVSEIRTAQRAEGPATILAIGTANPANCVEQSTYPDFYFKITNSEHKTELKEKFQRMCDKSMIKRRYMYLTEEILKENPSVCEYMAPSLDARQDMVVVEVPRLGKEAAVKAIKEWGQPKSKITHLIVCTTSGVDMPGADYQLTKLLGLRPYVKRYMMYQQGCFAGGTVLRLAKDLAENNKGARVLVVCSEVTAVTFRGPSDTHLDSLVGQALFGDGAAALIVGSDPVPEIEKPIFEMVWTAQTIAPDSEGGIDGHLREAGLTFHLLKDVPGIVSKNINKALVEAFEPLGISDYNSIFWIAHPGGPAILDQVEQKLALKPEKMKATREVLSEYGNMSSACVLVILDEMRKKSAQDGLKTTGEGLEFGVLFGFGPGLTIETVVLRSVAI.

The active site involves Cys164.

Belongs to the thiolase-like superfamily. Chalcone/stilbene synthases family.

The catalysed reaction is (E)-4-coumaroyl-CoA + 3 malonyl-CoA + 3 H(+) = 2',4,4',6'-tetrahydroxychalcone + 3 CO2 + 4 CoA. It functions in the pathway secondary metabolite biosynthesis; flavonoid biosynthesis. The primary product of this enzyme is 4,2',4',6'-tetrahydroxychalcone (also termed naringenin-chalcone or chalcone) which can under specific conditions spontaneously isomerize into naringenin. This chain is Chalcone synthase 8 (CHS8), found in Medicago sativa (Alfalfa).